We begin with the raw amino-acid sequence, 134 residues long: Ribosome-binding factor A (134 aa).

It belongs to the RbfA family. Monomer. Binds 30S ribosomal subunits, but not 50S ribosomal subunits or 70S ribosomes.

It localises to the cytoplasm. One of several proteins that assist in the late maturation steps of the functional core of the 30S ribosomal subunit. Associates with free 30S ribosomal subunits (but not with 30S subunits that are part of 70S ribosomes or polysomes). Required for efficient processing of 16S rRNA. May interact with the 5'-terminal helix region of 16S rRNA. This Psychrobacter cryohalolentis (strain ATCC BAA-1226 / DSM 17306 / VKM B-2378 / K5) protein is Ribosome-binding factor A.